The following is a 699-amino-acid chain: Elongation factor G (699 aa).

The region spanning 10 to 292 is the tr-type G domain; it reads DRTRNIGIMA…AVIDYLPSPT (283 aa). GTP contacts are provided by residues 19-26, 90-94, and 144-147; these read AHIDAGKT, DTPGH, and NKMD.

It belongs to the TRAFAC class translation factor GTPase superfamily. Classic translation factor GTPase family. EF-G/EF-2 subfamily.

It localises to the cytoplasm. Catalyzes the GTP-dependent ribosomal translocation step during translation elongation. During this step, the ribosome changes from the pre-translocational (PRE) to the post-translocational (POST) state as the newly formed A-site-bound peptidyl-tRNA and P-site-bound deacylated tRNA move to the P and E sites, respectively. Catalyzes the coordinated movement of the two tRNA molecules, the mRNA and conformational changes in the ribosome. The chain is Elongation factor G from Coxiella burnetii (strain Dugway 5J108-111).